We begin with the raw amino-acid sequence, 209 residues long: Ribosomal RNA large subunit methyltransferase E (209 aa).

Positions 63, 65, 83, 99, and 124 each coordinate S-adenosyl-L-methionine. The active-site Proton acceptor is the Lys164.

This sequence belongs to the class I-like SAM-binding methyltransferase superfamily. RNA methyltransferase RlmE family.

It is found in the cytoplasm. It catalyses the reaction uridine(2552) in 23S rRNA + S-adenosyl-L-methionine = 2'-O-methyluridine(2552) in 23S rRNA + S-adenosyl-L-homocysteine + H(+). Functionally, specifically methylates the uridine in position 2552 of 23S rRNA at the 2'-O position of the ribose in the fully assembled 50S ribosomal subunit. This is Ribosomal RNA large subunit methyltransferase E from Shewanella baltica (strain OS223).